A 1045-amino-acid polypeptide reads, in one-letter code: MNKTNPERKISLTSFKERMACKEKPRDLQVLLIISIVLSCSFAVSATVEEANALLKWKSTFTNQTSSSKLSSWVNPNTSSFCTSWYGVACSLGSIIRLNLTNTGIEGTFEDFPFSSLPNLTFVDLSMNRFSGTISPLWGRFSKLEYFDLSINQLVGEIPPELGDLSNLDTLHLVENKLNGSIPSEIGRLTKVTEIAIYDNLLTGPIPSSFGNLTKLVNLYLFINSLSGSIPSEIGNLPNLRELCLDRNNLTGKIPSSFGNLKNVTLLNMFENQLSGEIPPEIGNMTALDTLSLHTNKLTGPIPSTLGNIKTLAVLHLYLNQLNGSIPPELGEMESMIDLEISENKLTGPVPDSFGKLTALEWLFLRDNQLSGPIPPGIANSTELTVLQLDTNNFTGFLPDTICRGGKLENLTLDDNHFEGPVPKSLRDCKSLIRVRFKGNSFSGDISEAFGVYPTLNFIDLSNNNFHGQLSANWEQSQKLVAFILSNNSITGAIPPEIWNMTQLSQLDLSSNRITGELPESISNINRISKLQLNGNRLSGKIPSGIRLLTNLEYLDLSSNRFSSEIPPTLNNLPRLYYMNLSRNDLDQTIPEGLTKLSQLQMLDLSYNQLDGEISSQFRSLQNLERLDLSHNNLSGQIPPSFKDMLALTHVDVSHNNLQGPIPDNAAFRNAPPDAFEGNKDLCGSVNTTQGLKPCSITSSKKSHKDRNLIIYILVPIIGAIIILSVCAGIFICFRKRTKQIEEHTDSESGGETLSIFSFDGKVRYQEIIKATGEFDPKYLIGTGGHGKVYKAKLPNAIMAVKKLNETTDSSISNPSTKQEFLNEIRALTEIRHRNVVKLFGFCSHRRNTFLVYEYMERGSLRKVLENDDEAKKLDWGKRINVVKGVAHALSYMHHDRSPAIVHRDISSGNILLGEDYEAKISDFGTAKLLKPDSSNWSAVAGTYGYVAPELAYAMKVTEKCDVYSFGVLTLEVIKGEHPGDLVSTLSSSPPDATLSLKSISDHRLPEPTPEIKEEVLEILKVALLCLHSDPQARPTMLSISTAFS.

Residues 1–43 (MNKTNPERKISLTSFKERMACKEKPRDLQVLLIISIVLSCSFA) form the signal peptide. Residues 44–709 (VSATVEEANA…SKKSHKDRNL (666 aa)) lie on the Extracellular side of the membrane. N-linked (GlcNAc...) asparagine glycans are attached at residues N63, N77, N99, and N119. LRR repeat units lie at residues 92–116 (LGSI…PFSS), 117–140 (LPNL…LWGR), 141–165 (FSKL…LGDL), 166–189 (SNLD…IGRL), 191–212 (KVTE…SFGN), 213–237 (LTKL…IGNL), 238–260 (PNLR…SFGN), 262–285 (KNVT…IGNM), 286–309 (TALD…LGNI), 311–333 (TLAV…LGEM), 334–356 (ESMI…SFGK), 357–381 (LTAL…IANS), 383–405 (ELTV…ICRG), 406–429 (GKLE…LRDC), 431–452 (SLIR…AFGV), 453–476 (YPTL…NWEQ), 477–501 (SQKL…IWNM), 502–525 (TQLS…ISNI), 527–549 (RISK…IRLL), 550–573 (TNLE…LNNL), 575–597 (RLYY…LTKL), 598–620 (SQLQ…QFRS), 621–644 (LQNL…SFKD), and 646–670 (LALT…AFRN). N-linked (GlcNAc...) asparagine glycans are attached at residues N179 and N212. N249, N263, and N284 each carry an N-linked (GlcNAc...) asparagine glycan. A glycan (N-linked (GlcNAc...) asparagine) is linked at N323. Residues N380, N393, and N410 are each glycosylated (N-linked (GlcNAc...) asparagine). 2 N-linked (GlcNAc...) asparagine glycosylation sites follow: N487 and N500. N-linked (GlcNAc...) asparagine glycosylation occurs at N580. N633 carries an N-linked (GlcNAc...) asparagine glycan. N-linked (GlcNAc...) asparagine glycosylation occurs at N687. Residues 710–730 (IIYILVPIIGAIIILSVCAGI) traverse the membrane as a helical segment. Residues 731–1045 (FICFRKRTKQ…TMLSISTAFS (315 aa)) lie on the Cytoplasmic side of the membrane. T772 carries the phosphothreonine modification. Positions 775–1045 (FDPKYLIGTG…TMLSISTAFS (271 aa)) constitute a Protein kinase domain. Residues 781–789 (IGTGGHGKV) and K802 contribute to the ATP site. Y853 and Y892 each carry phosphotyrosine. Residue D905 is the Proton acceptor of the active site. Phosphoserine is present on S938. Residues Y946 and Y953 each carry the phosphotyrosine modification.

It belongs to the protein kinase superfamily. Ser/Thr protein kinase family. In terms of assembly, interacts with MDIS1 and LURE1.2. Binds to SCOOP12; this interaction triggers the formation of complex between MIK2 and the BAK1/SERK3 and SERK4 coreceptors. As to expression, expressed in pollen tubes. Highly expressed in shoots, roots and leaves.

It localises to the cell membrane. The catalysed reaction is L-seryl-[protein] + ATP = O-phospho-L-seryl-[protein] + ADP + H(+). It carries out the reaction L-threonyl-[protein] + ATP = O-phospho-L-threonyl-[protein] + ADP + H(+). Functionally, acts as a receptor of SCOOP peptides from Brassicaceae plants regulating multiple processing including plant growth, development and stress responses. Perception of SCOOP peptides induces the association of MIK2 with the coreceptors BAK1/SERK3 and SERK4 and relays the signaling through the activation of receptor-like cytosolic kinases (RLCKs) BIK1 and PBL1. Also able to detect SCOOP-like proteins (SCOOPL) present in fungal Fusarium spp. and bacterial Comamonadaceae to elicit various immune responses, including growth inhibition, ROS production, calcium Ca(2+) influx, MAPK activation and MYB51 promoter activation in roots, thus being required for resistance to several root pathogens. Involved in the pollen tube perception of the female signal. Required to trigger defense responses toward generalist herbivores such as Spodoptera littoralis, probably via the activation of jasmonate and indole glucosinolate biosynthesis. This chain is MDIS1-interacting receptor like kinase 2, found in Arabidopsis thaliana (Mouse-ear cress).